Consider the following 235-residue polypeptide: MCHDTAPALFPRTASTGSIDGAICALCYAGATRGPRLLVLPDIYGCNAFYRGYAAYLAEQGAGEVLLVDPFAAFGELATVTREAAFQRRHRLADRAYVEELIDFIDGQRIEGVVGFCLGGLFVFELARQQVVSRLVAYYPFPQGLENRDPLDVPFDYLPALRSRHTVIVGDDDALLGTQNLQRLQAQARANDAIDLHIMNGAGHGFLADLESPDTARAAVAKRGLRIGTTTLLGG.

Catalysis depends on residues Cys-117, Asp-173, and His-204.

It belongs to the dienelactone hydrolase family. As to quaternary structure, monomer.

The catalysed reaction is 2-(5-oxo-2,5-dihydrofuran-2-ylidene)acetate + H2O = 4-oxohex-2-enedioate + H(+). It functions in the pathway aromatic compound metabolism; 3-chlorocatechol degradation. Ring cleavage of cyclic ester dienelactone to produce maleylacetate. In Cupriavidus pinatubonensis (strain JMP 134 / LMG 1197) (Cupriavidus necator (strain JMP 134)), this protein is Carboxymethylenebutenolidase 2 (tfdEII).